Reading from the N-terminus, the 153-residue chain is Probable succinate transporter subunit YjjB (153 aa).

Transmembrane regions (helical) follow at residues W7–F27, M51–I71, V83–I103, and F125–W145.

Belongs to the ThrE exporter (TC 2.A.79) family. As to quaternary structure, the transporter is composed of YjjB and YjjP.

The protein localises to the cell inner membrane. Involved in succinate export with YjjP. Both proteins are required for export. In Yersinia pestis bv. Antiqua (strain Antiqua), this protein is Probable succinate transporter subunit YjjB.